Consider the following 389-residue polypeptide: Cytochrome f (389 aa).

The signal sequence occupies residues 1 to 42 (MTTFFISKVNGPVNKSLIWLKIHIYEFFLLKFMLLFPPTVCS). Heme contacts are provided by tyrosine 105, cysteine 125, cysteine 128, and histidine 129. A helical membrane pass occupies residues 355–375 (LQALIVFFIFVILTQLFLVLK).

The protein belongs to the cytochrome f family. The 4 large subunits of the cytochrome b6-f complex are cytochrome b6, subunit IV (17 kDa polypeptide, petD), cytochrome f and the Rieske protein, while the 4 small subunits are PetG, PetL, PetM and PetN. The complex functions as a dimer. Heme is required as a cofactor.

Its subcellular location is the plastid. It localises to the chloroplast thylakoid membrane. Its function is as follows. Component of the cytochrome b6-f complex, which mediates electron transfer between photosystem II (PSII) and photosystem I (PSI), cyclic electron flow around PSI, and state transitions. The polypeptide is Cytochrome f (Pleurastrum terricola (Filamentous green alga)).